We begin with the raw amino-acid sequence, 160 residues long: SsrA-binding protein (160 aa).

This sequence belongs to the SmpB family.

The protein resides in the cytoplasm. Its function is as follows. Required for rescue of stalled ribosomes mediated by trans-translation. Binds to transfer-messenger RNA (tmRNA), required for stable association of tmRNA with ribosomes. tmRNA and SmpB together mimic tRNA shape, replacing the anticodon stem-loop with SmpB. tmRNA is encoded by the ssrA gene; the 2 termini fold to resemble tRNA(Ala) and it encodes a 'tag peptide', a short internal open reading frame. During trans-translation Ala-aminoacylated tmRNA acts like a tRNA, entering the A-site of stalled ribosomes, displacing the stalled mRNA. The ribosome then switches to translate the ORF on the tmRNA; the nascent peptide is terminated with the 'tag peptide' encoded by the tmRNA and targeted for degradation. The ribosome is freed to recommence translation, which seems to be the essential function of trans-translation. In Yersinia pseudotuberculosis serotype O:1b (strain IP 31758), this protein is SsrA-binding protein.